Consider the following 144-residue polypeptide: Peptide methionine sulfoxide reductase MsrB (144 aa).

A compositionally biased stretch (basic and acidic residues) spans M1–L12. A disordered region spans residues M1–T25. The MsrB domain maps to Q5–V128. C117 functions as the Nucleophile in the catalytic mechanism.

It belongs to the MsrB Met sulfoxide reductase family.

The enzyme catalyses L-methionyl-[protein] + [thioredoxin]-disulfide + H2O = L-methionyl-(R)-S-oxide-[protein] + [thioredoxin]-dithiol. The polypeptide is Peptide methionine sulfoxide reductase MsrB (Lactiplantibacillus plantarum (strain ATCC BAA-793 / NCIMB 8826 / WCFS1) (Lactobacillus plantarum)).